The chain runs to 213 residues: Retinitis pigmentosa 9 protein homolog (213 aa).

The disordered stretch occupies residues Met-1–Asp-61. A PIM1-binding region spans residues Met-1–Val-147. Basic and acidic residues-rich tracts occupy residues Arg-9–Arg-21 and Ile-52–Asp-61. The CCHC-type zinc finger occupies Gln-96–Phe-114. A Glycyl lysine isopeptide (Lys-Gly) (interchain with G-Cter in SUMO2) cross-link involves residue Lys-121. A disordered region spans residues Gln-154–Glu-213. The span at Lys-176 to Ser-204 shows a compositional bias: basic residues. A phosphoserine; by PIM1; in vitro mark is found at Ser-204 and Ser-206.

As to quaternary structure, binds to PIM1. Binds to ZNHIT4. Highly expressed in the testis, moderately in the kidney, liver and spleen, and weakly in the skeletal muscle and heart.

It is found in the nucleus. Functionally, is thought to be a target protein for the PIM1 kinase. May play some roles in B-cell proliferation in association with PIM1. The sequence is that of Retinitis pigmentosa 9 protein homolog (rp9) from Mus musculus (Mouse).